The primary structure comprises 148 residues: Inner membrane protein YccF (148 aa).

The Periplasmic segment spans residues 1 to 14; the sequence is MRTVLNILNFVLGG. A helical membrane pass occupies residues 15 to 37; it reads FATTLGWLLATLVSIVLIFTLPL. Topologically, residues 38-76 are cytoplasmic; the sequence is TRSCWEITKLSLVPYGNEAIHVDELNPAGKNVLLNTGGT. A helical membrane pass occupies residues 77 to 99; sequence VLNIFWLIFFGWWLCLMHIATGI. At 100–102 the chain is on the periplasmic side; that stretch reads AQC. A helical membrane pass occupies residues 103–125; that stretch reads ISIIGIPVGIANFKIAAIALWPV. Residues 126-148 lie on the Cytoplasmic side of the membrane; sequence GRRVVSVETAQAAREANARRRFE.

The protein resides in the cell inner membrane. The sequence is that of Inner membrane protein YccF (yccF) from Escherichia coli (strain K12).